We begin with the raw amino-acid sequence, 487 residues long: MKITKPHVAMFASPGMGHIIPVIELGKRLAGSHGFDVTIFVLETDAASAQSQFLNSPGCDAALVDIVGLPTPDISGLVDPSAFFGIKLLVMMRETIPTIRSKIEEMQHKPTALIVDLFGLDAIPLGGEFNMLTYIFIASNARFLAVALFFPTLDKDMEEEHIIKKQPMVMPGCEPVRFEDTLETFLDPNSQLYREFVPFGSVFPTCDGIIVNTWDDMEPKTLKSLQDPKLLGRIAGVPVYPIGPLSRPVDPSKTNHPVLDWLNKQPDESVLYISFGSGGSLSAKQLTELAWGLEMSQQRFVWVVRPPVDGSACSAYLSANSGKIRDGTPDYLPEGFVSRTHERGFMVSSWAPQAEILAHQAVGGFLTHCGWNSILESVVGGVPMIAWPLFAEQMMNATLLNEELGVAVRSKKLPSEGVITRAEIEALVRKIMVEEEGAEMRKKIKKLKETAAESLSCDGGVAHESLSRIADESEHLLERVRCMARGA.

H18 serves as the catalytic Proton acceptor. H18 contacts an anthocyanidin. D116 (charge relay) is an active-site residue. A351, Q353, H368, W371, N372, S373, and E376 together coordinate UDP-alpha-D-glucose. A391 serves as a coordination point for an anthocyanidin. UDP-alpha-D-glucose is bound by residues E392 and Q393.

The protein belongs to the UDP-glycosyltransferase family. In terms of assembly, interacts with SIS8. As to expression, expressed in seedlings, roots and leaves.

It is found in the nucleus. The enzyme catalyses (E)-coniferaldehyde + UDP-alpha-D-glucose = 4-O-(beta-D-glucosyl)-4-(E)-coniferyl aldehyde + UDP + H(+). It carries out the reaction (E)-sinapaldehyde + UDP-alpha-D-glucose = 4-O-(beta-D-glucosyl)-4-trans-sinapoyl aldehyde + UDP + H(+). Its function is as follows. UDP-glycosyltransferase that glucosylates coniferyl aldehyde to form coniferyl aldehyde 4-O-glucoside. Glucosylates sinapyl aldehyde to form sinapyl aldehyde 4-O-glucoside. Is not active in presence of coniferyl alcohol or sinapyl alcohol. Can glucosylate the phytotoxic xenobiotic compound 2,4,5-trichlorophenol (TCP). This Arabidopsis thaliana (Mouse-ear cress) protein is UDP-glycosyltransferase 72E1.